A 406-amino-acid polypeptide reads, in one-letter code: NADH-quinone oxidoreductase subunit D (406 aa).

It belongs to the complex I 49 kDa subunit family. NDH-1 is composed of 14 different subunits. Subunits NuoB, C, D, E, F, and G constitute the peripheral sector of the complex.

It localises to the cell inner membrane. It carries out the reaction a quinone + NADH + 5 H(+)(in) = a quinol + NAD(+) + 4 H(+)(out). Functionally, NDH-1 shuttles electrons from NADH, via FMN and iron-sulfur (Fe-S) centers, to quinones in the respiratory chain. The immediate electron acceptor for the enzyme in this species is believed to be ubiquinone. Couples the redox reaction to proton translocation (for every two electrons transferred, four hydrogen ions are translocated across the cytoplasmic membrane), and thus conserves the redox energy in a proton gradient. The sequence is that of NADH-quinone oxidoreductase subunit D from Acidiphilium cryptum (strain JF-5).